Reading from the N-terminus, the 420-residue chain is Replication factor C large subunit (420 aa).

46-53 (GVQGSGKT) contacts ATP.

Belongs to the activator 1 small subunits family. RfcL subfamily. In terms of assembly, heteromultimer composed of small subunits (RfcS) and large subunits (RfcL).

In terms of biological role, part of the RFC clamp loader complex which loads the PCNA sliding clamp onto DNA. The sequence is that of Replication factor C large subunit from Thermoplasma volcanium (strain ATCC 51530 / DSM 4299 / JCM 9571 / NBRC 15438 / GSS1).